A 333-amino-acid chain; its full sequence is Trans-1,2-dihydrobenzene-1,2-diol dehydrogenase (333 aa).

The protein belongs to the Gfo/Idh/MocA family. Homodimer.

It carries out the reaction (1R,2R)-1,2-dihydrobenzene-1,2-diol + NADP(+) = catechol + NADPH + H(+). The catalysed reaction is D-xylose + NADP(+) = D-xylono-1,5-lactone + NADPH + H(+). The protein is Trans-1,2-dihydrobenzene-1,2-diol dehydrogenase (Dhdh) of Mus musculus (Mouse).